A 383-amino-acid polypeptide reads, in one-letter code: TOM1-like protein 2 (383 aa).

Positions Ala45–Ser178 constitute a VHS domain. Residues Leu223–Glu310 enclose the GAT domain. The disordered stretch occupies residues Tyr305–Lys383. Composition is skewed to basic and acidic residues over residues Lys306–Ser316 and Glu339–Glu354. Phosphoserine is present on residues Ser377 and Ser378.

The protein belongs to the TOM1 family. In terms of tissue distribution, ubiquitously expressed.

It localises to the cytoplasm. The protein resides in the membrane. Binds ubiquitin in vitro. Might contribute to the loading of the ESCRT machinery. The chain is TOM1-like protein 2 from Arabidopsis thaliana (Mouse-ear cress).